A 680-amino-acid chain; its full sequence is Translation factor GUF1 homolog, chloroplastic (680 aa).

Residues 1 to 51 constitute a chloroplast transit peptide; sequence MATATASRLAVPAPRTSPQAPGRRRPAAPLPSAPPRPRALSAAPRGRVVCP. Positions 1–68 are disordered; the sequence is MATATASRLA…ASTTDAGQDR (68 aa). The segment covering 28–37 has biased composition (pro residues); it reads APLPSAPPRP. A compositionally biased stretch (low complexity) spans 38 to 60; sequence RALSAAPRGRVVCPAAPASSPAS. Residues 75–256 form the tr-type G domain; the sequence is SNIRNFSIIA…AIVTKIPPPQ (182 aa). Residues 84-91, 149-153, and 203-206 each bind GTP; these read AHIDHGKS, DTPGH, and NKID.

Belongs to the TRAFAC class translation factor GTPase superfamily. Classic translation factor GTPase family. LepA subfamily.

Its subcellular location is the plastid. It is found in the chloroplast. The enzyme catalyses GTP + H2O = GDP + phosphate + H(+). Functionally, promotes chloroplast protein synthesis. May act as a fidelity factor of the translation reaction, by catalyzing a one-codon backward translocation of tRNAs on improperly translocated ribosomes. In Oryza sativa subsp. japonica (Rice), this protein is Translation factor GUF1 homolog, chloroplastic.